A 278-amino-acid chain; its full sequence is Elongation factor Ts (278 aa).

Residues 79 to 82 (TDFV) form an involved in Mg(2+) ion dislocation from EF-Tu region.

The protein belongs to the EF-Ts family.

The protein localises to the cytoplasm. Functionally, associates with the EF-Tu.GDP complex and induces the exchange of GDP to GTP. It remains bound to the aminoacyl-tRNA.EF-Tu.GTP complex up to the GTP hydrolysis stage on the ribosome. The chain is Elongation factor Ts from Borrelia hermsii (strain HS1 / DAH).